The following is a 103-amino-acid chain: N(4)-acetylcytidine amidohydrolase (103 aa).

The region spanning 6 to 101 (ITFFQRFQDD…QTQFYVIEFK (96 aa)) is the ASCH domain. Lys21 (proton acceptor) is an active-site residue. Catalysis depends on Thr24, which acts as the Nucleophile. Glu74 (proton donor) is an active-site residue.

This sequence belongs to the N(4)-acetylcytidine amidohydrolase family.

It catalyses the reaction N(4)-acetylcytidine + H2O = cytidine + acetate + H(+). The enzyme catalyses N(4)-acetyl-2'-deoxycytidine + H2O = 2'-deoxycytidine + acetate + H(+). It carries out the reaction N(4)-acetylcytosine + H2O = cytosine + acetate + H(+). In terms of biological role, catalyzes the hydrolysis of N(4)-acetylcytidine (ac4C). The chain is N(4)-acetylcytidine amidohydrolase (yqfB) from Escherichia coli (strain SE11).